Here is a 263-residue protein sequence, read N- to C-terminus: MLELRLVQGSLLKKVLEAIRELVTDANFDCSGTGFSLQAMDSSHVALVALLLRSEGFEHYRCDRNLSMGMNLNNMAKMLRCAGNDDIITIKADDGSDTVTFMFESPNQDKIADFEMKLMDIDSEHLGIPDSEYQAIVRMPSSEFSRICKDLSSIGDTVIISVTKEGVKFSTAGDIGTANIVCRQNKTVDKPEDATIIEMQEPVSLTFALRYMNSFTKASPLSEQVTISLSSELPVVVEYKIAEMGYIRFYLAPKIEEDEEMKS.

A DNA-binding region spans residues 61-80 (RCDRNLSMGMNLNNMAKMLR).

The protein belongs to the PCNA family. Homotrimer. Interacts with FEN1A. Interacts with POLL. Interacts with RAD/GEN1. Interacts with DJA7 and DJA8. In terms of tissue distribution, expressed in proliferating tissues. Expressed in roots and root apex. Expressed at low levels in young leaves. Not detected in mature leaves. Highly expressed in shoot apical meristem (SAM). Expressed in flag leaves and panicles.

Its subcellular location is the nucleus. Functionally, this protein is an auxiliary protein of DNA polymerase delta and is involved in the control of eukaryotic DNA replication by increasing the polymerase's processibility during elongation of the leading strand. In Oryza sativa subsp. japonica (Rice), this protein is Proliferating cell nuclear antigen.